The following is a 234-amino-acid chain: Leucyl/phenylalanyl-tRNA--protein transferase (234 aa).

It belongs to the L/F-transferase family.

The protein resides in the cytoplasm. The enzyme catalyses N-terminal L-lysyl-[protein] + L-leucyl-tRNA(Leu) = N-terminal L-leucyl-L-lysyl-[protein] + tRNA(Leu) + H(+). It catalyses the reaction N-terminal L-arginyl-[protein] + L-leucyl-tRNA(Leu) = N-terminal L-leucyl-L-arginyl-[protein] + tRNA(Leu) + H(+). It carries out the reaction L-phenylalanyl-tRNA(Phe) + an N-terminal L-alpha-aminoacyl-[protein] = an N-terminal L-phenylalanyl-L-alpha-aminoacyl-[protein] + tRNA(Phe). Functions in the N-end rule pathway of protein degradation where it conjugates Leu, Phe and, less efficiently, Met from aminoacyl-tRNAs to the N-termini of proteins containing an N-terminal arginine or lysine. In Shigella dysenteriae serotype 1 (strain Sd197), this protein is Leucyl/phenylalanyl-tRNA--protein transferase.